Consider the following 227-residue polypeptide: AN1-type zinc finger protein 3 (227 aa).

An A20-type zinc finger spans residues 12-44 (PSLPPRCPCGFWGSSKTMNLCSKCFADFQKKQP). 4 residues coordinate Zn(2+): C18, C20, C32, and C35. The disordered stretch occupies residues 41–151 (KKQPDDDSTP…RPEESGRSKQ (111 aa)). Low complexity-rich tracts occupy residues 49–59 (TPSTSNSQSDL) and 66–77 (SDNNNTSVTTPT). Composition is skewed to polar residues over residues 78–94 (LSPS…VTSP) and 111–127 (ITPT…SESE). Basic and acidic residues predominate over residues 135–148 (RLVENPERPEESGR). Residues 151–200 (QKSRRRCFQCQTKLELVQQELGSCRCGYVFCMLHRLPEQHDCTFDHMGRG) form an AN1-type zinc finger. Zn(2+) is bound by residues C157, C160, C174, C176, C181, H184, H190, and C192.

The polypeptide is AN1-type zinc finger protein 3 (Zfand3) (Rattus norvegicus (Rat)).